A 1486-amino-acid chain; its full sequence is Chromosome partition protein MukB (1486 aa).

34-41 (GGNGAGKS) is a binding site for ATP. 3 coiled-coil regions span residues 326-418 (LEAD…QYNQ), 444-480 (LETF…QAYQ), and 509-603 (RHLA…RAPV). Residues 666–783 (PGGSEDQRLN…EVPLFGRAAR (118 aa)) form a flexible hinge region. 3 coiled-coil regions span residues 835 to 923 (EAEI…AKLE), 977 to 1115 (EMLS…TAKA), and 1209 to 1266 (VEAI…QNVS).

The protein belongs to the SMC family. MukB subfamily. Homodimerization via its hinge domain. Binds to DNA via its C-terminal region. Interacts, and probably forms a ternary complex, with MukE and MukF via its C-terminal region. The complex formation is stimulated by calcium or magnesium. Interacts with tubulin-related protein FtsZ.

It is found in the cytoplasm. The protein localises to the nucleoid. In terms of biological role, plays a central role in chromosome condensation, segregation and cell cycle progression. Functions as a homodimer, which is essential for chromosome partition. Involved in negative DNA supercoiling in vivo, and by this means organize and compact chromosomes. May achieve or facilitate chromosome segregation by condensation DNA from both sides of a centrally located replisome during cell division. This chain is Chromosome partition protein MukB, found in Shigella flexneri serotype 5b (strain 8401).